The sequence spans 95 residues: DDRRSPLEECFQQNDYEEFLEIARNSQLYQESLREDSSYHLSFIESLKSDALFSYEKKFWEADGIHGGKVINDLSLIHDLPKREIQALCYPSIKK.

The protein belongs to the flavin monoamine oxidase family. FIG1 subfamily. In terms of assembly, homodimer; non-covalently linked. The cofactor is FAD. Post-translationally, N-glycosylated. Expressed by the venom gland.

The protein resides in the secreted. The catalysed reaction is an L-alpha-amino acid + O2 + H2O = a 2-oxocarboxylate + H2O2 + NH4(+). It carries out the reaction L-leucine + O2 + H2O = 4-methyl-2-oxopentanoate + H2O2 + NH4(+). The enzyme catalyses L-phenylalanine + O2 + H2O = 3-phenylpyruvate + H2O2 + NH4(+). It catalyses the reaction L-tryptophan + O2 + H2O = indole-3-pyruvate + H2O2 + NH4(+). The catalysed reaction is L-methionine + O2 + H2O = 4-methylsulfanyl-2-oxobutanoate + H2O2 + NH4(+). It carries out the reaction L-arginine + O2 + H2O = 5-guanidino-2-oxopentanoate + H2O2 + NH4(+). Functionally, catalyzes an oxidative deamination of predominantly hydrophobic and aromatic L-amino acids, thus producing hydrogen peroxide that may contribute to the diverse toxic effects of this enzyme. Is highly active on L-Met, L-Leu, L-Phe, L-Trp, and L-Arg, and no weakly or no active on L-His, L-Tyr, L-Ile, L-Gln, and L-Lys. Exhibits diverse biological activities, such as antibacterial activity against both Gram-positive (B.subtilis) and Gram-negative (E.coli) bacteria, and inhibition of ADP- or collagen-induced platelet aggregation. Effects of snake L-amino oxidases on platelets are controversial, since they either induce aggregation or inhibit agonist-induced aggregation. These different effects are probably due to different experimental conditions. This protein may also induce hemorrhage, hemolysis, edema, apoptosis, and have antiparasitic activities. In Naja oxiana (Central Asian cobra), this protein is L-amino-acid oxidase.